Consider the following 112-residue polypeptide: Small ribosomal subunit protein uS17 (112 aa).

Belongs to the universal ribosomal protein uS17 family. In terms of assembly, part of the 30S ribosomal subunit.

One of the primary rRNA binding proteins, it binds specifically to the 5'-end of 16S ribosomal RNA. The polypeptide is Small ribosomal subunit protein uS17 (Thermotoga neapolitana (strain ATCC 49049 / DSM 4359 / NBRC 107923 / NS-E)).